The primary structure comprises 290 residues: Appressorium protein ROW2 (290 aa).

The first 19 residues, 1–19 (MFTKSVFIALVAGVLGVTA), serve as a signal peptide directing secretion. Residues 266 to 290 (AIKTPSKRSVMATHVKRSPEWEEEP) are disordered.

The protein resides in the secreted. The protein localises to the nucleus. Plays a role in the formation of the appressorium, a specialized infection structure with the purpose of penetrating the host surface, and is required for proper remodeling of the appressorium wall and vesicle secretion. The sequence is that of Appressorium protein ROW2 from Mycosarcoma maydis (Corn smut fungus).